Reading from the N-terminus, the 159-residue chain is Endoribonuclease YbeY (159 aa).

H119, H123, and H129 together coordinate Zn(2+).

Belongs to the endoribonuclease YbeY family. It depends on Zn(2+) as a cofactor.

Its subcellular location is the cytoplasm. Single strand-specific metallo-endoribonuclease involved in late-stage 70S ribosome quality control and in maturation of the 3' terminus of the 16S rRNA. In Acinetobacter baylyi (strain ATCC 33305 / BD413 / ADP1), this protein is Endoribonuclease YbeY.